The chain runs to 318 residues: uncharacterized protein (318 aa).

The stretch at Leu-67–Glu-157 forms a coiled coil. The interval Glu-172–Leu-318 is disordered. Composition is skewed to basic and acidic residues over residues Asn-175–Lys-193 and Lys-219–Ser-236. Over residues Val-237–Thr-248 the composition is skewed to polar residues. 2 stretches are compositionally biased toward basic and acidic residues: residues Ser-249 to Ala-274 and Ser-300 to Gly-310.

This is an uncharacterized protein from Staphylococcus aureus (strain Mu50 / ATCC 700699).